The following is a 392-amino-acid chain: 8-amino-7-oxononanoate synthase (392 aa).

Residue Arg19 participates in substrate binding. 106 to 107 contacts pyridoxal 5'-phosphate; the sequence is GY. Residue His131 coordinates substrate. Pyridoxal 5'-phosphate-binding residues include Ser176, His204, and Thr233. Lys236 carries the N6-(pyridoxal phosphate)lysine modification. Thr350 is a binding site for substrate.

The protein belongs to the class-II pyridoxal-phosphate-dependent aminotransferase family. BioF subfamily. Homodimer. It depends on pyridoxal 5'-phosphate as a cofactor.

The catalysed reaction is 6-carboxyhexanoyl-[ACP] + L-alanine + H(+) = (8S)-8-amino-7-oxononanoate + holo-[ACP] + CO2. It participates in cofactor biosynthesis; biotin biosynthesis. Its function is as follows. Catalyzes the decarboxylative condensation of pimeloyl-[acyl-carrier protein] and L-alanine to produce 8-amino-7-oxononanoate (AON), [acyl-carrier protein], and carbon dioxide. This is 8-amino-7-oxononanoate synthase from Stutzerimonas stutzeri (strain A1501) (Pseudomonas stutzeri).